Consider the following 263-residue polypeptide: MGKLTGKTALITGASQGIGEGIARVFARHGANLILLDISDEIEKLADELGGRGHRCTAVKADVRDFASVQAAVARAKETEGRIDILVNNAGVCRLGNFLDMSEEDRDFHIDINIKGVWNVTKAVLPEMIKRKDGRIVMMSSVTGDMVADPGETAYALSKAAIVGLTKSLAVEYAQSGIRVNAICPGYVRTPMAESIARQSNPDDPESVLTEMAKAIPLRRLADPLEVGELAAFLASDESSYLTGTQNVIDGGSTLPESVSVGV.

Position 10–32 (10–32) interacts with NAD(+); that stretch reads LITGASQGIGEGIARVFARHGAN. Position 141 (serine 141) interacts with substrate. The active-site Proton acceptor is the tyrosine 155.

This sequence belongs to the short-chain dehydrogenases/reductases (SDR) family.

This chain is Oxidoreductase UcpA (ucpA), found in Salmonella typhi.